A 252-amino-acid chain; its full sequence is Glucosamine-6-phosphate deaminase (252 aa).

Catalysis depends on aspartate 67, which acts as the Proton acceptor; for enolization step. The For ring-opening step role is filled by asparagine 137. Histidine 139 acts as the Proton acceptor; for ring-opening step in catalysis. The For ring-opening step role is filled by glutamate 144.

The protein belongs to the glucosamine/galactosamine-6-phosphate isomerase family. NagB subfamily.

It carries out the reaction alpha-D-glucosamine 6-phosphate + H2O = beta-D-fructose 6-phosphate + NH4(+). Its pathway is amino-sugar metabolism; N-acetylneuraminate degradation; D-fructose 6-phosphate from N-acetylneuraminate: step 5/5. Functionally, catalyzes the reversible isomerization-deamination of glucosamine 6-phosphate (GlcN6P) to form fructose 6-phosphate (Fru6P) and ammonium ion. In Staphylococcus aureus (strain Mu3 / ATCC 700698), this protein is Glucosamine-6-phosphate deaminase.